Here is a 275-residue protein sequence, read N- to C-terminus: Large ribosomal subunit protein uL2 (275 aa).

The disordered stretch occupies residues 224 to 275; that stretch reads VMNPVDHPHGGGEGKSPIGRPSPVTPWGKPTLGYKTRKKNKASDKFIIKRRK. Positions 264 to 275 are enriched in basic and acidic residues; the sequence is KASDKFIIKRRK.

The protein belongs to the universal ribosomal protein uL2 family. In terms of assembly, part of the 50S ribosomal subunit. Forms a bridge to the 30S subunit in the 70S ribosome.

In terms of biological role, one of the primary rRNA binding proteins. Required for association of the 30S and 50S subunits to form the 70S ribosome, for tRNA binding and peptide bond formation. It has been suggested to have peptidyltransferase activity; this is somewhat controversial. Makes several contacts with the 16S rRNA in the 70S ribosome. This Acetivibrio thermocellus (strain ATCC 27405 / DSM 1237 / JCM 9322 / NBRC 103400 / NCIMB 10682 / NRRL B-4536 / VPI 7372) (Clostridium thermocellum) protein is Large ribosomal subunit protein uL2.